The sequence spans 145 residues: Small ribosomal subunit protein uS9 (145 aa).

The segment covering 1–13 has biased composition (polar residues); that stretch reads MATDQHSNKSNVS. The disordered stretch occupies residues 1 to 24; it reads MATDQHSNKSNVSAARKPLSPSPT.

Belongs to the universal ribosomal protein uS9 family.

It is found in the cytoplasm. This Lupinus polyphyllus (Large-leaved lupine) protein is Small ribosomal subunit protein uS9 (RPS16).